Here is a 20-residue protein sequence, read N- to C-terminus: Alpha-amylase (20 aa).

The catalysed reaction is Endohydrolysis of (1-&gt;4)-alpha-D-glucosidic linkages in polysaccharides containing three or more (1-&gt;4)-alpha-linked D-glucose units.. Its activity is regulated as follows. Strongly inhibited by Hg (2+). Inhibited by Zn (2+). Activated by Fe (2+), Mg (2+) and Ba (2+). Functionally, alpha-amylase active towards amylose, starch, amylopectin and maltodextrins. Has lower activity towards glycogen, and is not active towards alpha/beta-cyclodextrin. This is Alpha-amylase from Bacillus sp.